We begin with the raw amino-acid sequence, 277 residues long: 2-dehydro-3-deoxyphosphooctonate aldolase (277 aa).

Belongs to the KdsA family.

It localises to the cytoplasm. The catalysed reaction is D-arabinose 5-phosphate + phosphoenolpyruvate + H2O = 3-deoxy-alpha-D-manno-2-octulosonate-8-phosphate + phosphate. The protein operates within carbohydrate biosynthesis; 3-deoxy-D-manno-octulosonate biosynthesis; 3-deoxy-D-manno-octulosonate from D-ribulose 5-phosphate: step 2/3. Its pathway is bacterial outer membrane biogenesis; lipopolysaccharide biosynthesis. In Hydrogenovibrio crunogenus (strain DSM 25203 / XCL-2) (Thiomicrospira crunogena), this protein is 2-dehydro-3-deoxyphosphooctonate aldolase.